A 177-amino-acid chain; its full sequence is Nucleoside triphosphate/diphosphate phosphatase (177 aa).

The active-site Proton donor is arginine 23. Mg(2+)-binding residues include asparagine 87, aspartate 103, aspartate 105, aspartate 107, aspartate 120, and glutamate 123.

This sequence belongs to the Ntdp family. Requires Mg(2+) as cofactor.

It carries out the reaction a ribonucleoside 5'-triphosphate + H2O = a ribonucleoside 5'-diphosphate + phosphate + H(+). The enzyme catalyses a ribonucleoside 5'-diphosphate + H2O = a ribonucleoside 5'-phosphate + phosphate + H(+). Has nucleoside phosphatase activity towards nucleoside triphosphates and nucleoside diphosphates. This Streptococcus mutans serotype c (strain ATCC 700610 / UA159) protein is Nucleoside triphosphate/diphosphate phosphatase.